The primary structure comprises 322 residues: MAASSSLVPDRLRLPLCFLGVFVCYFYYGILQEKITRGKYGEGAKQETFTFALTLVFIQCVVNAVFAKILIQFFDTARVDRTRSWLYAACSVSYLGAMVSSNSALQFVNYPTQVLGKSCKPIPVMLLGVTLLKKKYPMAKYLCVLLIVAGVALFMYKPKKVVGIEEHTIGYGELLLLLSLTLDGLTGVSQDHMRAHYQTGSNHMMLNINLWSTLLLGAGILFTGELWEFLSFAERYPTIVYNILLFGLTSALGQSFIFMTVVYFGPLTCSIITTTRKFFTILASVILFANPISPMQWVGTVLVFLGLGLDAKFGKGAKKTSH.

8 helical membrane-spanning segments follow: residues 12–32, 51–71, 85–105, 136–156, 168–188, 210–230, 243–263, and 285–305; these read LRLP…GILQ, FALT…KILI, WLYA…NSAL, YPMA…LFMY, TIGY…LTGV, LWST…WEFL, ILLF…TVVY, and VILF…LVFL. The Di-lysine motif motif lies at 318-322; that stretch reads KKTSH.

It belongs to the nucleotide-sugar transporter family. SLC35B subfamily.

It is found in the endoplasmic reticulum membrane. It catalyses the reaction ADP(in) + ATP(out) = ADP(out) + ATP(in). The enzyme catalyses UDP(out) + ATP(in) = UDP(in) + ATP(out). The catalysed reaction is UTP(out) + ATP(in) = UTP(in) + ATP(out). It carries out the reaction dATP(out) + ATP(in) = dATP(in) + ATP(out). Functionally, ATP:ADP antiporter that catalyzes the exchange of ATP and ADP across the endoplasmic reticulum (ER) membrane. Imports ATP from the cytosol to the ER lumen and exports ADP in the opposite direction. Regulates ER energy metabolism and protein biogenesis. Appears to be part of a calcium-dependent ER to cytosol low energy response axis, where calcium efflux from ER to the cytosol triggers ATP import into the ER lumen to maintain sufficient ATP supply. Provides ATP to ER chaperone HSPA5 that drives protein folding and trafficking in the ER. Can transport dATP, UTP or UDP in exchange for ATP, but the physiological relevance of this process remains to be established. This is Solute carrier family 35 member B1 (SLC35B1) from Bos taurus (Bovine).